The sequence spans 622 residues: UvrABC system protein C (622 aa).

In terms of domain architecture, GIY-YIG spans Glu-13–Ile-92. In terms of domain architecture, UVR spans Lys-204–Ile-239.

This sequence belongs to the UvrC family. As to quaternary structure, interacts with UvrB in an incision complex.

Its subcellular location is the cytoplasm. Its function is as follows. The UvrABC repair system catalyzes the recognition and processing of DNA lesions. UvrC both incises the 5' and 3' sides of the lesion. The N-terminal half is responsible for the 3' incision and the C-terminal half is responsible for the 5' incision. This Clostridium tetani (strain Massachusetts / E88) protein is UvrABC system protein C.